The sequence spans 137 residues: Small ribosomal subunit protein uS9c (137 aa).

The segment at 106–137 (KSEGYLTRDPRVKERKKYGLKKARKAPQFSKR) is disordered. Residues 118 to 137 (KERKKYGLKKARKAPQFSKR) show a composition bias toward basic residues.

Belongs to the universal ribosomal protein uS9 family.

The protein resides in the plastid. The protein localises to the chloroplast. The protein is Small ribosomal subunit protein uS9c (rps9) of Pyropia yezoensis (Susabi-nori).